Here is a 46-residue protein sequence, read N- to C-terminus: Protein PsbN (46 aa).

Residues 10–30 (VAIAVLAALLGLTGFGVYTAF) form a helical membrane-spanning segment.

The protein belongs to the PsbN family.

The protein localises to the cellular thylakoid membrane. In terms of biological role, may play a role in photosystem I and II biogenesis. The polypeptide is Protein PsbN (Synechococcus sp. (strain CC9311)).